Consider the following 583-residue polypeptide: MSKTALGKANASVQSARALYLRLLKYAARYWVAFLISIIALVTFSATNTGFLATIKLVTDAGFVNQDSTKLHLLPFMLFGLLAIRALAGFISNFAMRWVARRVVENLRQDTFRRLMSLPVSFFDAVSAGVVTSKLTYDTEQMAGAATKVAMSAVRDTLTILGMVGYMLYLDWQLTLIFAVVAPAMAWYLKSMTPKLRSSGKAVQQTMGEMTKVIEEAVSGQRMVKIFGGGDYEYQRFTKVAGKNRHMQIRLARFSGLNSMVVELLAGVALALVVFYAVGKFSAGEFAAFIGALLMLIGPVKTLTSLNEELQVGLAAAHSVFELIDSIPEVDEGHEEIGRAEGSIVFENVTLQYPSAQRPALLDLNFTVKPGEKIALVGRSGGGKTTLVNLLPRFYEVQQGRVLIDGVDVRNMSLKSLRQQFSLVSQDVILFNDTVFNNIAYGVLRNASEEDVIAAAKAAHAWDFIQQLPNGLQSEIGDRGVRLSGGQRQRLAIARAILKNAPILLLDEATSALDTESERHVQAALDELMQNRTSIVIAHRLSTIENADRIMVMEQGRIIEGGSHEELLALDGHYAKLYRKQFH.

The next 6 membrane-spanning stretches (helical) occupy residues valine 32 to leucine 52, leucine 71 to isoleucine 91, leucine 115 to leucine 135, isoleucine 160 to valine 180, serine 259 to glycine 279, and phenylalanine 286 to leucine 306. In terms of domain architecture, ABC transmembrane type-1 spans phenylalanine 34–valine 312. The 237-residue stretch at isoleucine 344–lysine 580 folds into the ABC transporter domain. Glycine 378–threonine 385 provides a ligand contact to ATP.

It belongs to the ABC transporter superfamily. Lipid exporter (TC 3.A.1.106) family. In terms of assembly, homodimer.

Its subcellular location is the cell inner membrane. It catalyses the reaction ATP + H2O + lipid A-core oligosaccharideSide 1 = ADP + phosphate + lipid A-core oligosaccharideSide 2.. Involved in lipopolysaccharide (LPS) biosynthesis. Translocates lipid A-core from the inner to the outer leaflet of the inner membrane. Transmembrane domains (TMD) form a pore in the inner membrane and the ATP-binding domain (NBD) is responsible for energy generation. The protein is ATP-dependent lipid A-core flippase of Methylobacillus flagellatus (strain ATCC 51484 / DSM 6875 / VKM B-1610 / KT).